A 394-amino-acid polypeptide reads, in one-letter code: MAKAKFERTKPHVNIGTIGHVDHGKTSLTAAITMVLAKTGGAQATAYDQIDAAPEEKERGITISTAHVEYETKNRHYAHVDCPGHADYVKNMITGAAQMDGAILVVSAADGPMPQTREHILLAKQVGVPAMVVFLNKVDMVDDSDLLELVEMEVRELLSKYGFPGDEIPIIKGSALQALEGKPEGEKAINELMDAVDSYIPQPVRATDKPFLMPIEDVFSISGRSTVVTGRVESGIIKVGEEIEIVGLKDTQKTTCTGVEMFRKLLDEGQAGDNVGILLRGTKREEVERGQVLAKPGSIKPHDKFEAEVYVLSKEEGGRHTPFTNDYRPQFYFRTTDVTGTIKLPADKQMVMPGDNATFTVELIKPIAMQEGLKFSIREGGRTVGAGVVTKINN.

In terms of domain architecture, tr-type G spans 10 to 204 (KPHVNIGTIG…AVDSYIPQPV (195 aa)). The segment at 19–26 (GHVDHGKT) is G1. GTP is bound at residue 19–26 (GHVDHGKT). T26 serves as a coordination point for Mg(2+). Residues 60–64 (GITIS) form a G2 region. Residues 81-84 (DCPG) form a G3 region. Residues 81–85 (DCPGH) and 136–139 (NKVD) contribute to the GTP site. The interval 136 to 139 (NKVD) is G4. A G5 region spans residues 174–176 (SAL).

The protein belongs to the TRAFAC class translation factor GTPase superfamily. Classic translation factor GTPase family. EF-Tu/EF-1A subfamily. Monomer.

The protein resides in the cytoplasm. It catalyses the reaction GTP + H2O = GDP + phosphate + H(+). Functionally, GTP hydrolase that promotes the GTP-dependent binding of aminoacyl-tRNA to the A-site of ribosomes during protein biosynthesis. This is Elongation factor Tu from Rickettsia montanensis.